The sequence spans 643 residues: MEKSSSCESLGSQPAVARPPSVDSLSSASTSHSENSVHTKSASVVSSDSISTSAENFSPDLRVLRESNKLAEMEEPPLLPGENIKDMAKDVTYICPFTGAVRGTLTVTNYRLYFKSMERDPPFVLDASLGVISRVEKIGGASSRGENSYGLETVCKDIRNLRFAHKPEGRTRRSIFENLMKYAFPVSNNLSLFAFEYKEVFPENGWKLYDSLSEYRRQGIPNESWRITKVNERYELCDTYPALLVVPANIPDEELKRVASFRSRGRIPVLSWIHPESQATITRCSQPMVGVSGKRSKEDEKYLQAIMDSNAQSHKIFIFDARPSVNAVANKAKGGGYESEDAYQNAELVFLDIHNIHVMRESLRKLKEIVYPNIEETHWLSNLESTHWLEHIKLILAGALRIADRVESGKTSVVVHCSDGWDRTAQLTSLAMLMLDGYYRTIRGFEVLVEKEWLSFGHRFQLRVGHGDKNHADADRSPVFLQFIDCVWQMTRQFPTAFEFNEYFLITILDHLYSCLFGTFLCNSEQQRGKENLPRRTVSLWSYINSQLEDFTNPLYGSYSNHVLYPVASMRHLELWVGYYVRWNPRMKPQEPIHNRYKELLAKRAELQKKVEELQREISNRSTSSSERAGSPAQCVTPVQTVV.

Polar residues-rich tracts occupy residues 1-12 (MEKSSSCESLGS) and 23-40 (DSLSSASTSHSENSVHTK). Positions 1–54 (MEKSSSCESLGSQPAVARPPSVDSLSSASTSHSENSVHTKSASVVSSDSISTSA) are disordered. 2 positions are modified to phosphoserine: Ser6 and Ser9. Low complexity predominate over residues 41-54 (SASVVSSDSISTSA). Ser58 is modified (phosphoserine). The GRAM domain occupies 68 to 139 (NKLAEMEEPP…GVISRVEKIG (72 aa)). The region spanning 205–580 (GWKLYDSLSE…RHLELWVGYY (376 aa)) is the Myotubularin phosphatase domain. Residues Asn330, Asn355, and Ile356 each coordinate a 1,2-diacyl-sn-glycero-3-phospho-(1D-myo-inositol-3,5-bisphosphate). Residues Asn330, Asn355, and Ile356 each coordinate a 1,2-diacyl-sn-glycero-3-phospho-(1D-myo-inositol-3-phosphate). The active-site Phosphocysteine intermediate is the Cys417. 8 residues coordinate a 1,2-diacyl-sn-glycero-3-phospho-(1D-myo-inositol-3,5-bisphosphate): Ser418, Asp419, Gly420, Trp421, Asp422, Arg423, Arg459, and Arg463. Residues Ser418, Asp419, Gly420, Trp421, Asp422, and Arg423 each coordinate a 1,2-diacyl-sn-glycero-3-phospho-(1D-myo-inositol-3-phosphate). Arg463 is a binding site for a 1,2-diacyl-sn-glycero-3-phospho-(1D-myo-inositol-3-phosphate). Residues 593–627 (IHNRYKELLAKRAELQKKVEELQREISNRSTSSSE) adopt a coiled-coil conformation. A disordered region spans residues 614-643 (LQREISNRSTSSSERAGSPAQCVTPVQTVV).

It belongs to the protein-tyrosine phosphatase family. Non-receptor class myotubularin subfamily. In terms of assembly, homodimer (via coiled-coil domain). Heterotetramer consisting of one MTMR2 dimer and one SBF2/MTMR13 dimer; specifically in peripheral nerves stabilizes SBF2/MTMR13 at the membranes and increases MTMR2 catalytic activity towards phosphatidylinositol 3,5-bisphosphate and to a lesser extent towards phosphatidylinositol 3-phosphate. Heterodimer with SBF1/MTMR5; acts as an adapter for the phosphatase MTMR2 to regulate MTMR2 catalytic activity and subcellular location. Heterodimer with MTMR12. Phosphorylation at Ser-58 decreases MTMR2 localization to endocytic vesicular structures.

It is found in the cytoplasm. The protein resides in the early endosome membrane. The protein localises to the perinuclear region. It localises to the cell projection. Its subcellular location is the axon. It is found in the endosome membrane. It catalyses the reaction a 1,2-diacyl-sn-glycero-3-phospho-(1D-myo-inositol-3,5-bisphosphate) + H2O = a 1,2-diacyl-sn-glycero-3-phospho-(1D-myo-inositol-5-phosphate) + phosphate. The enzyme catalyses a 1,2-diacyl-sn-glycero-3-phospho-(1D-myo-inositol-3-phosphate) + H2O = a 1,2-diacyl-sn-glycero-3-phospho-(1D-myo-inositol) + phosphate. The catalysed reaction is 1,2-dioctanoyl-sn-glycero-3-phospho-(1-D-myo-inositol-3-phosphate) + H2O = 1,2-dioctanoyl-sn-glycero-3-phospho-(1D-myo-inositol) + phosphate. It carries out the reaction 1,2-dioctanoyl-sn-glycero-3-phospho-(1D-myo-inositol-3,5-bisphosphate) + H2O = 1,2-dioctanoyl-sn-glycero-3-phospho-(1D-myo-inositol-5-phosphate) + phosphate. Functionally, lipid phosphatase that specifically dephosphorylates the D-3 position of phosphatidylinositol 3-phosphate and phosphatidylinositol 3,5-bisphosphate, generating phosphatidylinositol and phosphatidylinositol 5-phosphate. Regulates the level of these phosphoinositides critical for various biological processes including autophagy initiation and autophagosome maturation. The polypeptide is Phosphatidylinositol-3,5-bisphosphate 3-phosphatase MTMR2 (Bos taurus (Bovine)).